A 294-amino-acid chain; its full sequence is Protoheme IX farnesyltransferase (294 aa).

A run of 9 helical transmembrane segments spans residues Val24 to Val44, Leu48 to His68, Ala96 to Asn116, Leu118 to Leu138, Asn145 to Thr165, Ala172 to Ile192, Val224 to Leu244, Leu245 to Asp265, and Val268 to Leu288.

Belongs to the UbiA prenyltransferase family. Protoheme IX farnesyltransferase subfamily.

The protein resides in the cell inner membrane. It catalyses the reaction heme b + (2E,6E)-farnesyl diphosphate + H2O = Fe(II)-heme o + diphosphate. It functions in the pathway porphyrin-containing compound metabolism; heme O biosynthesis; heme O from protoheme: step 1/1. Functionally, converts heme B (protoheme IX) to heme O by substitution of the vinyl group on carbon 2 of heme B porphyrin ring with a hydroxyethyl farnesyl side group. The chain is Protoheme IX farnesyltransferase from Legionella pneumophila (strain Corby).